The chain runs to 379 residues: Protein RecA (379 aa).

Residues 1–23 form a disordered region; it reads MSVDVKSAQSSKSDSLQVEPRPG. The segment covering 7–16 has biased composition (polar residues); that stretch reads SAQSSKSDSL. Residue 84-91 participates in ATP binding; sequence GPESSGKT.

Belongs to the RecA family.

It is found in the cytoplasm. In terms of biological role, can catalyze the hydrolysis of ATP in the presence of single-stranded DNA, the ATP-dependent uptake of single-stranded DNA by duplex DNA, and the ATP-dependent hybridization of homologous single-stranded DNAs. It interacts with LexA causing its activation and leading to its autocatalytic cleavage. The protein is Protein RecA of Prochlorococcus marinus (strain MIT 9313).